A 368-amino-acid chain; its full sequence is E3 ubiquitin-protein ligase E3D (368 aa).

Ala-2 carries the N-acetylalanine modification. The BRAT1-like motif signature appears at 129-159; that stretch reads PLPSENWSALVGEWCCHPDPFANRPLHPREN. A Zn(2+)-binding site is contributed by Cys-144. Residues 214–236 are interaction with UBE2C; it reads RPSEGSFPNIPRSQFLQSIIAQC. The segment at 332-368 is HECT-like; that stretch reads LPSATCLELLLILSRNNASLPLSLRQMNSFQVAFLKM.

Interacts with UBE2C/UbcH10 (E2 ubiquitin-conjugating enzyme). In vitro, interacts with cyclin-B. In terms of processing, ubiquitinated by UBCH10 (E2 ubiquitin-conjugating enzyme).

Its subcellular location is the cytoplasm. It carries out the reaction S-ubiquitinyl-[E2 ubiquitin-conjugating enzyme]-L-cysteine + [acceptor protein]-L-lysine = [E2 ubiquitin-conjugating enzyme]-L-cysteine + N(6)-ubiquitinyl-[acceptor protein]-L-lysine.. Its pathway is protein modification; protein ubiquitination. Its function is as follows. E3 ubiquitin-protein ligase which accepts ubiquitin from specific E2 ubiquitin-conjugating enzymes, and transfers it to substrates, generally promoting their degradation by the proteasome. Independently of its E3 ubiquitin-protein ligase activity, acts as an inhibitor of CPSF3 endonuclease activity by blocking CPSF3 active site. This chain is E3 ubiquitin-protein ligase E3D (Ube3d), found in Mus musculus (Mouse).